A 391-amino-acid polypeptide reads, in one-letter code: MVMFKKIKSFEVVFNDPEKVYGCGEKVAGRVIVEVCEVTRIKAVRILACGVAKVLWMQGSQQCKQTLDYLRYEDTLLLDDHPTGENEMVIMRPGNKYEYKFGFELPQGPLGTSFKGKYGCVDYWVKAFLDRPSQPTQETKKHFEVMDLVDVNTPDLMAPVSAKKEKKVSCMFIPDGRVSVSARIDRKGFCEGDEINIHADFENTCSRIVVPKAAIVARHTYLANGQTKVLTQKLSSVRGNHIISGTCASWRGKSLRVQKIRPSILGCNILRVEYFLLIYVSVPGSKKVILDLPLVIGSRSGLSSRTSSMASRTSSEMSWVDLNIPDTPEAPPCYMDIIPEDHRLESPTTPLLDDTDGSQDSPIFMYAPEFKFMPPPTYSEVDPCILNNNVQ.

A Glycyl lysine isopeptide (Lys-Gly) (interchain with G-Cter in ubiquitin) cross-link involves residue Lys-212. Ser-361 is modified (phosphoserine).

It belongs to the arrestin family. In terms of assembly, homodimer; disulfide-linked. Interacts with TXN/thioredoxin through its redox-active site. Interacts with transcriptional repressors ZBTB16, ZBTB32 and HDAC1. Interacts with DDIT4. Ubiquitinated; undergoes heterotypic 'Lys-48'-/'Lys-63'-branched polyubiquitination catalyzed by ITCH and UBR5 resulting in proteasomal degradation. Deubiquitinated by USP5, leading to TXNIP stabilization.

It is found in the cytoplasm. Functionally, may act as an oxidative stress mediator by inhibiting thioredoxin activity or by limiting its bioavailability. Interacts with COPS5 and restores COPS5-induced suppression of CDKN1B stability, blocking the COPS5-mediated translocation of CDKN1B from the nucleus to the cytoplasm. Functions as a transcriptional repressor, possibly by acting as a bridge molecule between transcription factors and corepressor complexes, and over-expression will induce G0/G1 cell cycle arrest. Required for the maturation of natural killer cells. Acts as a suppressor of tumor cell growth. Inhibits the proteasomal degradation of DDIT4, and thereby contributes to the inhibition of the mammalian target of rapamycin complex 1 (mTORC1). The chain is Thioredoxin-interacting protein (TXNIP) from Sus scrofa (Pig).